A 429-amino-acid polypeptide reads, in one-letter code: MDRIHITGGAPLNGVIPISGAKNAALPLMIASLLTGETLELINVPRLADIAALTRILGNHGVDHMVVGKRPGQTTETGQTIRLTASNVIDTTAPYELVSTMRASFWVVAPLLARFGEAKVSLPGGCAIGTRPVDLLIMALERLGAEIEIDAGYVVARTKNGLRGAEIAFPKVTVGGTHVALMAAALAYGTTVLENAAREPEVVDLAECLNKMGAKIRGAGTPRIEIEGVARLNGARHEVLPDRIETGTYAMAVAMAGGDVVLKDTRADLLHSALDVLSTTGAEITQVEGGIRVRRNGGGIAAVDITTDPFPGFPTDLQAQFMALMTLAKGQSHIRETIFENRFMHVQELARLGAKIRLEGDLAIVEGVDRLKGAPVMATDLRASVSLVIAGLAAEGETQINRVYHLDRGFEALEAKLGRCGAQIERVRA.

A phosphoenolpyruvate-binding site is contributed by 22-23 (KN). Arginine 102 serves as a coordination point for UDP-N-acetyl-alpha-D-glucosamine. Cysteine 126 functions as the Proton donor in the catalytic mechanism. Cysteine 126 is subject to 2-(S-cysteinyl)pyruvic acid O-phosphothioketal. UDP-N-acetyl-alpha-D-glucosamine is bound by residues 131 to 135 (RPVDL), aspartate 316, and isoleucine 338.

Belongs to the EPSP synthase family. MurA subfamily.

The protein localises to the cytoplasm. It catalyses the reaction phosphoenolpyruvate + UDP-N-acetyl-alpha-D-glucosamine = UDP-N-acetyl-3-O-(1-carboxyvinyl)-alpha-D-glucosamine + phosphate. It participates in cell wall biogenesis; peptidoglycan biosynthesis. In terms of biological role, cell wall formation. Adds enolpyruvyl to UDP-N-acetylglucosamine. This chain is UDP-N-acetylglucosamine 1-carboxyvinyltransferase, found in Methylobacterium radiotolerans (strain ATCC 27329 / DSM 1819 / JCM 2831 / NBRC 15690 / NCIMB 10815 / 0-1).